Here is a 529-residue protein sequence, read N- to C-terminus: Aldehyde dehydrogenase 1 (529 aa).

Residue 251 to 256 participates in NAD(+) binding; the sequence is GSTYVG. Active-site residues include Glu-273 and Cys-307.

It belongs to the aldehyde dehydrogenase family.

It catalyses the reaction an aldehyde + NAD(+) + H2O = a carboxylate + NADH + 2 H(+). The protein is Aldehyde dehydrogenase 1 of Entamoeba histolytica (strain ATCC 30459 / HM-1:IMSS / ABRM).